The primary structure comprises 498 residues: Glycerol kinase (498 aa).

Thr12 is an ADP binding site. Thr12, Thr13, and Ser14 together coordinate ATP. Residue Thr12 participates in sn-glycerol 3-phosphate binding. Arg16 contacts ADP. Sn-glycerol 3-phosphate contacts are provided by Arg82, Glu83, Tyr134, and Asp243. Glycerol contacts are provided by Arg82, Glu83, Tyr134, Asp243, and Gln244. ADP contacts are provided by Thr265 and Gly308. The ATP site is built by Thr265, Gly308, Gln312, and Gly409. ADP contacts are provided by Gly409 and Asn413.

Belongs to the FGGY kinase family. As to quaternary structure, homotetramer and homodimer (in equilibrium).

It catalyses the reaction glycerol + ATP = sn-glycerol 3-phosphate + ADP + H(+). It functions in the pathway polyol metabolism; glycerol degradation via glycerol kinase pathway; sn-glycerol 3-phosphate from glycerol: step 1/1. Activated by phosphorylation and inhibited by fructose 1,6-bisphosphate (FBP). Key enzyme in the regulation of glycerol uptake and metabolism. Catalyzes the phosphorylation of glycerol to yield sn-glycerol 3-phosphate. This is Glycerol kinase from Clostridium botulinum (strain ATCC 19397 / Type A).